The sequence spans 415 residues: Probable G-protein coupled receptor 19 (415 aa).

Residues 1-69 are Extracellular-facing; sequence MVFAHRMDNS…LKPGEVATAS (69 aa). Residues Asn-25 and Asn-52 are each glycosylated (N-linked (GlcNAc...) asparagine). The chain crosses the membrane as a helical span at residues 70–90; that stretch reads IFFGILWLFSIFGNSLVCLVI. Topologically, residues 91–102 are cytoplasmic; the sequence is HRSRRTQSTTNY. Residues 103–123 form a helical membrane-spanning segment; the sequence is FVVSMACADLLISVASTPFVL. Over 124 to 143 the chain is Extracellular; sequence LQFTTGRWTLGSATCKVVRY. A disulfide bridge connects residues Cys-138 and Cys-210. Residues 144 to 161 form a helical membrane-spanning segment; the sequence is FQYLTPGVQIYVLLSICI. Residues 162 to 182 lie on the Cytoplasmic side of the membrane; that stretch reads DRFYTIVYPLSFKVSREKAKK. Residues 183–203 form a helical membrane-spanning segment; that stretch reads MIAASWVFDAGFVTPVLFFYG. At 204-221 the chain is on the extracellular side; sequence SNWDSHCNYFLPSSWEGT. Residues 222–242 traverse the membrane as a helical segment; it reads AYTVIHFLVGFVIPSVLIILF. The Cytoplasmic portion of the chain corresponds to 243–277; it reads YQKVIKYIWRIGTDGRTVRRTMNIVPRTKVKTIKM. Residues 278–298 traverse the membrane as a helical segment; the sequence is FLILNLLFLLSWLPFHVAQLW. Topologically, residues 299–309 are extracellular; it reads HPHEQDYKKSS. Residues 310 to 325 form a helical membrane-spanning segment; it reads LVFTAITWISFSSSAS. Topologically, residues 326 to 415 are cytoplasmic; the sequence is KPTLYSIYNA…INSNPPNTFV (90 aa).

Belongs to the G-protein coupled receptor 1 family. In terms of tissue distribution, abundant expression in the brain.

The protein resides in the cell membrane. Functionally, G-protein coupled receptor that plays a role in the regulation of circadian rhythms and energy metabolism. Participates in maintaining proper circadian gene expression in the suprachiasmatic nucleus (SCN), the locus of the master circadian clock in the brain. May function as a coordinator of aging-associated metabolic dysfunction, stress response, DNA integrity management, and eventual senescence. Upon binding to adropin, modulates mitochondrial energy metabolism via the p44/42-PDK4 signaling pathway, influencing pyruvate dehydrogenase activity. The polypeptide is Probable G-protein coupled receptor 19 (GPR19) (Homo sapiens (Human)).